Consider the following 782-residue polypeptide: Protein VAC14 homolog (782 aa).

Methionine 1 bears the N-acetylmethionine mark. HEAT repeat units follow at residues 5–42 (KDFA…EFVA), 89–126 (LYLK…VARG), 171–208 (FDLV…VPDI), and 212–249 (DYLP…EIKK). Threonine 11 is subject to Phosphothreonine. Disordered stretches follow at residues 335-372 (EDDE…DGSC) and 471-517 (SSPA…LECS). The HEAT 5 repeat unit spans residues 438 to 475 (RHTDSLFPILLQTLSDESDEVILKDLEVLAEIASSPAG). Positions 478-488 (DDPGPLDGPDL) are enriched in low complexity. Phosphothreonine is present on threonine 499. Residues 506-517 (LNTSGTKGLECS) are compositionally biased toward polar residues. Serine 517 is subject to Phosphoserine. The HEAT 6 repeat unit spans residues 560–598 (LNAENIFHSMADILLREEDLKFASTMVHALNTILLTSTE). The residue at position 743 (serine 743) is a Phosphoserine. The mediates interaction with the PDZ domain of NOS1 stretch occupies residues 773–777 (GDHLD).

Belongs to the VAC14 family. Forms pentamers. Component of the PI(3,5)P2 regulatory complex/PAS complex, at least composed of PIKFYVE, FIG4 and VAC14. VAC14 nucleates the assembly of the complex and serves as a scaffold by pentamerizing into a star-shaped structure, which can bind a single copy each of PIKFYVE and FIG4 and coordinates their activities. Interacts with NOS1. In terms of assembly, (Microbial infection) Interacts with HTLV-1 Tax. In terms of tissue distribution, ubiquitously expressed.

It localises to the endosome membrane. The protein resides in the microsome membrane. Scaffold protein component of the PI(3,5)P2 regulatory complex which regulates both the synthesis and turnover of phosphatidylinositol 3,5-bisphosphate (PtdIns(3,5)P2). Pentamerizes into a star-shaped structure and nucleates the assembly of the complex. The pentamer binds a single copy each of PIKFYVE and FIG4 and coordinates both PIKfyve kinase activity and FIG4 phosphatase activity, being required to maintain normal levels of phosphatidylinositol 3-phosphate (PtdIns(3)P) and phosphatidylinositol 5-phosphate (PtdIns(5)P). Plays a role in the biogenesis of endosome carrier vesicles (ECV) / multivesicular bodies (MVB) transport intermediates from early endosomes. The protein is Protein VAC14 homolog (VAC14) of Homo sapiens (Human).